A 432-amino-acid chain; its full sequence is MAKNVVVLGTQWGDEGKGKVVDLLTDRAKYVVRYQGGHNAGHTLVIDGEKTVLHLIPSGILRDNVTCIIGNGVVLSPDALMKEMTMLEERGVPVRERLKISEACPLILPYHIALDVAREKARGAKAIGTTGRGIGPAYEDKVARRGLRVGDLFNAEDFAAKLKEVLDVHNFTLTQYYGEEAVDFEETLNGAMEVADILKAMVVDVTDELDKAHKAGLPIMFEGAQGTLLDIDHGTYPYVTSSNTTVGGVATGAGFGPLKLDYVLGIVKAYTTRVGSGPFPTELDCEVGQHLGVKGHEFGATTGRKRRTGWFDAVAMKRAVQINSITGFCLTKLDVLDGLESLQICVGYKDADGNVKDVPPMAADGYDKVTPVYEEMPGWTDNTFGVTEFEGLPQAAKNYIKRLEELTGVPVDIVSTGPDRNETIVLRSPYDA.

GTP is bound by residues 13-19 (GDEGKGK) and 41-43 (GHT). Asp-14 acts as the Proton acceptor in catalysis. Mg(2+)-binding residues include Asp-14 and Gly-41. Residues 14–17 (DEGK), 39–42 (NAGH), Thr-130, Arg-144, Gln-225, Thr-240, and Arg-304 each bind IMP. The active-site Proton donor is His-42. 300 to 306 (ATTGRKR) provides a ligand contact to substrate. GTP-binding positions include Arg-306, 332-334 (KLD), and 415-417 (STG).

The protein belongs to the adenylosuccinate synthetase family. As to quaternary structure, homodimer. Mg(2+) is required as a cofactor.

The protein resides in the cytoplasm. It catalyses the reaction IMP + L-aspartate + GTP = N(6)-(1,2-dicarboxyethyl)-AMP + GDP + phosphate + 2 H(+). It functions in the pathway purine metabolism; AMP biosynthesis via de novo pathway; AMP from IMP: step 1/2. Plays an important role in the de novo pathway of purine nucleotide biosynthesis. Catalyzes the first committed step in the biosynthesis of AMP from IMP. The sequence is that of Adenylosuccinate synthetase from Alteromonas mediterranea (strain DSM 17117 / CIP 110805 / LMG 28347 / Deep ecotype).